The primary structure comprises 262 residues: Adenosylcobinamide-GDP ribazoletransferase (262 aa).

A run of 6 helical transmembrane segments spans residues 43–63 (YFGL…WLTQ), 66–86 (LPAG…TGGF), 120–140 (GALA…ELAL), 146–166 (AGSA…SLIF), 191–211 (LFIL…IAAL), and 242–262 (AAQQ…GSIL).

It belongs to the CobS family. Mg(2+) serves as cofactor.

The protein localises to the cell inner membrane. It catalyses the reaction alpha-ribazole + adenosylcob(III)inamide-GDP = adenosylcob(III)alamin + GMP + H(+). The enzyme catalyses alpha-ribazole 5'-phosphate + adenosylcob(III)inamide-GDP = adenosylcob(III)alamin 5'-phosphate + GMP + H(+). Its pathway is cofactor biosynthesis; adenosylcobalamin biosynthesis; adenosylcobalamin from cob(II)yrinate a,c-diamide: step 7/7. Joins adenosylcobinamide-GDP and alpha-ribazole to generate adenosylcobalamin (Ado-cobalamin). Also synthesizes adenosylcobalamin 5'-phosphate from adenosylcobinamide-GDP and alpha-ribazole 5'-phosphate. This is Adenosylcobinamide-GDP ribazoletransferase from Shewanella sp. (strain ANA-3).